A 400-amino-acid polypeptide reads, in one-letter code: Riboflavin biosynthesis protein RibBA (400 aa).

Positions 1–202 (MTTFGTIEQA…IADLVMYRRR (202 aa)) are DHBP synthase. Residues 28–29 (RE), Asp33, 141–145 (RTGHT), and Glu165 each bind D-ribulose 5-phosphate. Glu29 lines the Mg(2+) pocket. His144 is a binding site for Mg(2+). The interval 203–400 (TEKQVELVAE…KRDRMGHLLG (198 aa)) is GTP cyclohydrolase II. 253-257 (RAHSE) lines the GTP pocket. Zn(2+) is bound by residues Cys258, Cys269, and Cys271. GTP-binding positions include Gln274, 297–299 (EGR), and Thr319. Catalysis depends on Asp331, which acts as the Proton acceptor; for GTP cyclohydrolase activity. Arg333 serves as the catalytic Nucleophile; for GTP cyclohydrolase activity. Residues Thr354 and Lys359 each contribute to the GTP site.

It in the N-terminal section; belongs to the DHBP synthase family. This sequence in the C-terminal section; belongs to the GTP cyclohydrolase II family. Mg(2+) is required as a cofactor. The cofactor is Mn(2+). It depends on Zn(2+) as a cofactor.

The catalysed reaction is D-ribulose 5-phosphate = (2S)-2-hydroxy-3-oxobutyl phosphate + formate + H(+). It carries out the reaction GTP + 4 H2O = 2,5-diamino-6-hydroxy-4-(5-phosphoribosylamino)-pyrimidine + formate + 2 phosphate + 3 H(+). It functions in the pathway cofactor biosynthesis; riboflavin biosynthesis; 2-hydroxy-3-oxobutyl phosphate from D-ribulose 5-phosphate: step 1/1. Its pathway is cofactor biosynthesis; riboflavin biosynthesis; 5-amino-6-(D-ribitylamino)uracil from GTP: step 1/4. Catalyzes the conversion of D-ribulose 5-phosphate to formate and 3,4-dihydroxy-2-butanone 4-phosphate. In terms of biological role, catalyzes the conversion of GTP to 2,5-diamino-6-ribosylamino-4(3H)-pyrimidinone 5'-phosphate (DARP), formate and pyrophosphate. The protein is Riboflavin biosynthesis protein RibBA of Salinispora tropica (strain ATCC BAA-916 / DSM 44818 / JCM 13857 / NBRC 105044 / CNB-440).